We begin with the raw amino-acid sequence, 284 residues long: 4-diphosphocytidyl-2-C-methyl-D-erythritol kinase (284 aa).

Residue lysine 14 is part of the active site. 98 to 108 is a binding site for ATP; it reads PMGGGLGGGSS. Residue aspartate 140 is part of the active site.

It belongs to the GHMP kinase family. IspE subfamily.

The catalysed reaction is 4-CDP-2-C-methyl-D-erythritol + ATP = 4-CDP-2-C-methyl-D-erythritol 2-phosphate + ADP + H(+). It participates in isoprenoid biosynthesis; isopentenyl diphosphate biosynthesis via DXP pathway; isopentenyl diphosphate from 1-deoxy-D-xylulose 5-phosphate: step 3/6. Catalyzes the phosphorylation of the position 2 hydroxy group of 4-diphosphocytidyl-2C-methyl-D-erythritol. The protein is 4-diphosphocytidyl-2-C-methyl-D-erythritol kinase of Shewanella halifaxensis (strain HAW-EB4).